Consider the following 426-residue polypeptide: Serine--tRNA ligase (426 aa).

230 to 232 (TSE) lines the L-serine pocket. 261–263 (RKE) is an ATP binding site. Glu284 is a binding site for L-serine. Position 348–351 (348–351 (EISS)) interacts with ATP. Ser385 is a binding site for L-serine.

Belongs to the class-II aminoacyl-tRNA synthetase family. Type-1 seryl-tRNA synthetase subfamily. As to quaternary structure, homodimer. The tRNA molecule binds across the dimer.

Its subcellular location is the cytoplasm. It carries out the reaction tRNA(Ser) + L-serine + ATP = L-seryl-tRNA(Ser) + AMP + diphosphate + H(+). The catalysed reaction is tRNA(Sec) + L-serine + ATP = L-seryl-tRNA(Sec) + AMP + diphosphate + H(+). It participates in aminoacyl-tRNA biosynthesis; selenocysteinyl-tRNA(Sec) biosynthesis; L-seryl-tRNA(Sec) from L-serine and tRNA(Sec): step 1/1. Functionally, catalyzes the attachment of serine to tRNA(Ser). Is also able to aminoacylate tRNA(Sec) with serine, to form the misacylated tRNA L-seryl-tRNA(Sec), which will be further converted into selenocysteinyl-tRNA(Sec). The polypeptide is Serine--tRNA ligase (Wolbachia pipientis subsp. Culex pipiens (strain wPip)).